The primary structure comprises 314 residues: Methionyl-tRNA formyltransferase (314 aa).

112–115 (SLLP) is a (6S)-5,6,7,8-tetrahydrofolate binding site.

Belongs to the Fmt family.

The catalysed reaction is L-methionyl-tRNA(fMet) + (6R)-10-formyltetrahydrofolate = N-formyl-L-methionyl-tRNA(fMet) + (6S)-5,6,7,8-tetrahydrofolate + H(+). Its function is as follows. Attaches a formyl group to the free amino group of methionyl-tRNA(fMet). The formyl group appears to play a dual role in the initiator identity of N-formylmethionyl-tRNA by promoting its recognition by IF2 and preventing the misappropriation of this tRNA by the elongation apparatus. The chain is Methionyl-tRNA formyltransferase from Aeromonas hydrophila subsp. hydrophila (strain ATCC 7966 / DSM 30187 / BCRC 13018 / CCUG 14551 / JCM 1027 / KCTC 2358 / NCIMB 9240 / NCTC 8049).